A 338-amino-acid polypeptide reads, in one-letter code: Large ribosomal subunit protein uL10 (338 aa).

Basic and acidic residues predominate over residues 309-327 (KAEVEEAKEEEKEEKKEEA). Residues 309–338 (KAEVEEAKEEEKEEKKEEAAPAAAGLGLLF) are disordered.

It belongs to the universal ribosomal protein uL10 family. In terms of assembly, part of the 50S ribosomal subunit. Forms part of the ribosomal stalk which helps the ribosome interact with GTP-bound translation factors. Forms a heptameric L10(L12)2(L12)2(L12)2 complex, where L10 forms an elongated spine to which the L12 dimers bind in a sequential fashion.

Functionally, forms part of the ribosomal stalk, playing a central role in the interaction of the ribosome with GTP-bound translation factors. The sequence is that of Large ribosomal subunit protein uL10 from Methanothermococcus thermolithotrophicus (Methanococcus thermolithotrophicus).